Consider the following 274-residue polypeptide: NH(3)-dependent NAD(+) synthetase (274 aa).

ATP is bound at residue glycine 46–serine 53. Aspartate 52 serves as a coordination point for Mg(2+). A deamido-NAD(+)-binding site is contributed by arginine 140. Residue threonine 160 participates in ATP binding. Glutamate 165 is a Mg(2+) binding site. The deamido-NAD(+) site is built by lysine 173 and aspartate 180. 2 residues coordinate ATP: lysine 189 and threonine 211. Histidine 260–lysine 261 serves as a coordination point for deamido-NAD(+).

It belongs to the NAD synthetase family. In terms of assembly, homodimer.

It catalyses the reaction deamido-NAD(+) + NH4(+) + ATP = AMP + diphosphate + NAD(+) + H(+). It functions in the pathway cofactor biosynthesis; NAD(+) biosynthesis; NAD(+) from deamido-NAD(+) (ammonia route): step 1/1. Functionally, catalyzes the ATP-dependent amidation of deamido-NAD to form NAD. Uses ammonia as a nitrogen source. The sequence is that of NH(3)-dependent NAD(+) synthetase from Nocardia farcinica (strain IFM 10152).